The sequence spans 514 residues: Endoglucanase MaCel5A (514 aa).

The first 23 residues, 1–23, serve as a signal peptide directing secretion; it reads MKRILFTAGGCLFYLLLAVKAYA. 2 stretches are compositionally biased toward low complexity: residues 91–114 and 179–201; these read GSSSSSSSSSSSSSGSSSSSSGSG and SSSSSSGGTSSSGSSSSGVSSSG. 2 disordered regions span residues 91–118 and 179–208; these read GSSSSSSSSSSSSSGSSSSSSGSGSSSG and SSSSSSGGTSSSGSSSSGVSSSGGSSGGDS. Glu346 (proton donor) is an active-site residue. Glu439 acts as the Nucleophile in catalysis.

Belongs to the glycosyl hydrolase 5 (cellulase A) family.

The enzyme catalyses Endohydrolysis of (1-&gt;4)-beta-D-glucosidic linkages in cellulose, lichenin and cereal beta-D-glucans.. Exhibits strong halostability and halotolerance. The activity increases about tenfold in the presence of 0.5 M NaCl, and about fivefold in the presence of 4.0 M NaCl. Tolerates detergents, but activity is decreased in the presence of EDTA. Activity is enhanced in the presence of Mn(2+), Ca(2+), Ba(2+) or Mg(2+), and decreased in the presence of Zn(2+), Cu(2+), Al(3+) or Fe(3+). In terms of biological role, endoglucanase that exhibits highest activity toward barley beta-glucan, lower activity toward carboxymethyl cellulose (CMC-Na), and marginal activity toward laminarin and xylan. In Microbulbifer sp. (strain ALW1), this protein is Endoglucanase MaCel5A.